We begin with the raw amino-acid sequence, 120 residues long: Large ribosomal subunit protein uL18 (120 aa).

It belongs to the universal ribosomal protein uL18 family. Part of the 50S ribosomal subunit; part of the 5S rRNA/L5/L18/L25 subcomplex. Contacts the 5S and 23S rRNAs.

In terms of biological role, this is one of the proteins that bind and probably mediate the attachment of the 5S RNA into the large ribosomal subunit, where it forms part of the central protuberance. The polypeptide is Large ribosomal subunit protein uL18 (Paramagnetospirillum magneticum (strain ATCC 700264 / AMB-1) (Magnetospirillum magneticum)).